We begin with the raw amino-acid sequence, 30 residues long: Large ribosomal subunit protein bL25 (30 aa).

Belongs to the bacterial ribosomal protein bL25 family. Part of the 50S ribosomal subunit; part of the 5S rRNA/L5/L18/L25 subcomplex. Contacts the 5S rRNA. Binds to the 5S rRNA independently of L5 and L18.

Its function is as follows. This is one of the proteins that binds to the 5S RNA in the ribosome where it forms part of the central protuberance. The polypeptide is Large ribosomal subunit protein bL25 (rplY) (Anabaena variabilis).